A 159-amino-acid chain; its full sequence is Ribosomal RNA large subunit methyltransferase H (159 aa).

S-adenosyl-L-methionine-binding positions include Gly-108 and 127–132; that span reads FSKMTF.

It belongs to the RNA methyltransferase RlmH family. Homodimer.

It is found in the cytoplasm. It catalyses the reaction pseudouridine(1915) in 23S rRNA + S-adenosyl-L-methionine = N(3)-methylpseudouridine(1915) in 23S rRNA + S-adenosyl-L-homocysteine + H(+). In terms of biological role, specifically methylates the pseudouridine at position 1915 (m3Psi1915) in 23S rRNA. The chain is Ribosomal RNA large subunit methyltransferase H from Clostridium perfringens (strain ATCC 13124 / DSM 756 / JCM 1290 / NCIMB 6125 / NCTC 8237 / Type A).